We begin with the raw amino-acid sequence, 344 residues long: Protein RecA (344 aa).

66–73 (GPESSGKT) lines the ATP pocket.

The protein belongs to the RecA family.

It localises to the cytoplasm. Functionally, can catalyze the hydrolysis of ATP in the presence of single-stranded DNA, the ATP-dependent uptake of single-stranded DNA by duplex DNA, and the ATP-dependent hybridization of homologous single-stranded DNAs. It interacts with LexA causing its activation and leading to its autocatalytic cleavage. The protein is Protein RecA of Methylobacillus flagellatus.